The chain runs to 116 residues: Large ribosomal subunit protein bL17 (116 aa).

The protein belongs to the bacterial ribosomal protein bL17 family. As to quaternary structure, part of the 50S ribosomal subunit. Contacts protein L32.

The chain is Large ribosomal subunit protein bL17 from Picosynechococcus sp. (strain ATCC 27264 / PCC 7002 / PR-6) (Agmenellum quadruplicatum).